The chain runs to 613 residues: 8-methylmenaquinol:fumarate reductase flavoprotein subunit (613 aa).

The tat-type signal signal peptide spans 1 to 33 (MSEQFTRREFLQSACITMGALAVSTSGVDRAFA). FAD-binding positions include 53–58 (GSGAAG), 78–93 (SKVM…AEGG), and Asp255. Substrate-binding residues include His276 and Thr288. Arg319 acts as the Proton acceptor in catalysis. Residue His387 coordinates substrate. Glu413 provides a ligand contact to FAD. Arg424 contacts substrate. 429–430 (SL) contributes to the FAD binding site.

The protein belongs to the FAD-dependent oxidoreductase 2 family. FRD/SDH subfamily. In terms of assembly, the MFR complex is composed of three subunits: a flavoprotein (SdhA), an iron-sulfur protein (SdhB), and one hydrophobic anchor protein (SdhE). FAD is required as a cofactor. Predicted to be exported by the Tat system. The position of the signal peptide cleavage has not been experimentally proven.

The protein localises to the periplasm. It localises to the cell membrane. It carries out the reaction 8-methylmenaquinone-6 + succinate = 8-methylmenaquinol-6 + fumarate. In terms of biological role, flavoprotein subunit of 8-methylmenaquinol:fumarate reductase (MFR), that catalyzes the reduction of fumarate using 8-methylmenaquinol-6 as electron donor. The complex shows no succinate oxidation activity. Is involved in anaerobic metabolism. SdhA contains the dicarboxylate reduction site. In Wolinella succinogenes (strain ATCC 29543 / DSM 1740 / CCUG 13145 / JCM 31913 / LMG 7466 / NCTC 11488 / FDC 602W) (Vibrio succinogenes), this protein is 8-methylmenaquinol:fumarate reductase flavoprotein subunit.